The primary structure comprises 727 residues: Glucans biosynthesis glucosyltransferase H (727 aa).

Residues 17–41 are disordered; that stretch reads GSAMPNERPGPMEPQSLSQMPEGFP. The next 6 membrane-spanning stretches (helical) occupy residues 58-80, 95-117, 407-429, 457-479, 499-521, and 572-594; these read FFVVGGALLLSSFAIYEMGAVFS, FAINFCWIALAFCSGIAGFLLLL, GIMAYLSSPFWLLLILTGLMLAL, ALRLFYITMVVLFGPKIFGVLLL, VLFEVILSALIAPIMMFIHCGAV, and LLAWMSPALIGLWLAVPISAWTG.

This sequence belongs to the glycosyltransferase 2 family. OpgH subfamily.

Its subcellular location is the cell inner membrane. The protein operates within glycan metabolism; osmoregulated periplasmic glucan (OPG) biosynthesis. Its function is as follows. Involved in the biosynthesis of osmoregulated periplasmic glucans (OPGs). The polypeptide is Glucans biosynthesis glucosyltransferase H (Shewanella oneidensis (strain ATCC 700550 / JCM 31522 / CIP 106686 / LMG 19005 / NCIMB 14063 / MR-1)).